Here is a 637-residue protein sequence, read N- to C-terminus: DNA mismatch repair protein MutL (637 aa).

The protein belongs to the DNA mismatch repair MutL/HexB family.

Its function is as follows. This protein is involved in the repair of mismatches in DNA. It is required for dam-dependent methyl-directed DNA mismatch repair. May act as a 'molecular matchmaker', a protein that promotes the formation of a stable complex between two or more DNA-binding proteins in an ATP-dependent manner without itself being part of a final effector complex. This is DNA mismatch repair protein MutL from Actinobacillus succinogenes (strain ATCC 55618 / DSM 22257 / CCUG 43843 / 130Z).